The following is a 304-amino-acid chain: Acetyl-coenzyme A carboxylase carboxyl transferase subunit beta (304 aa).

A CoA carboxyltransferase N-terminal domain is found at 29–298; the sequence is LWTKCVSCAA…QAYRPSPQAS (270 aa). Positions 33, 36, 52, and 55 each coordinate Zn(2+). Residues 33–55 form a C4-type zinc finger; that stretch reads CVSCAALHYTKDFQLNLCVCPAC.

It belongs to the AccD/PCCB family. As to quaternary structure, acetyl-CoA carboxylase is a heterohexamer composed of biotin carboxyl carrier protein (AccB), biotin carboxylase (AccC) and two subunits each of ACCase subunit alpha (AccA) and ACCase subunit beta (AccD). Zn(2+) serves as cofactor.

It localises to the cytoplasm. The enzyme catalyses N(6)-carboxybiotinyl-L-lysyl-[protein] + acetyl-CoA = N(6)-biotinyl-L-lysyl-[protein] + malonyl-CoA. It participates in lipid metabolism; malonyl-CoA biosynthesis; malonyl-CoA from acetyl-CoA: step 1/1. Its function is as follows. Component of the acetyl coenzyme A carboxylase (ACC) complex. Biotin carboxylase (BC) catalyzes the carboxylation of biotin on its carrier protein (BCCP) and then the CO(2) group is transferred by the transcarboxylase to acetyl-CoA to form malonyl-CoA. This is Acetyl-coenzyme A carboxylase carboxyl transferase subunit beta from Gloeobacter violaceus (strain ATCC 29082 / PCC 7421).